The chain runs to 280 residues: uncharacterized protein (280 aa).

An N-terminal signal peptide occupies residues 1–26 (MNILIKSAVKNFIVFSTALYTSFSFA).

The protein to E.coli YibQ.

This is an uncharacterized protein from Haemophilus influenzae (strain ATCC 51907 / DSM 11121 / KW20 / Rd).